Here is a 154-residue protein sequence, read N- to C-terminus: NADPH-dependent 7-cyano-7-deazaguanine reductase (154 aa).

Residues 1 to 13 (MSVTDVSGLSQLG) are compositionally biased toward polar residues. The disordered stretch occupies residues 1–30 (MSVTDVSGLSQLGTKVDTPESPEKAVLEKV). Residues 17 to 27 (DTPESPEKAVL) show a composition bias toward basic and acidic residues. Catalysis depends on Cys-52, which acts as the Thioimide intermediate. Asp-59 acts as the Proton donor in catalysis. Substrate contacts are provided by residues 74-76 (VES) and 93-94 (HE).

The protein belongs to the GTP cyclohydrolase I family. QueF type 1 subfamily.

Its subcellular location is the cytoplasm. The catalysed reaction is 7-aminomethyl-7-carbaguanine + 2 NADP(+) = 7-cyano-7-deazaguanine + 2 NADPH + 3 H(+). It functions in the pathway tRNA modification; tRNA-queuosine biosynthesis. Catalyzes the NADPH-dependent reduction of 7-cyano-7-deazaguanine (preQ0) to 7-aminomethyl-7-deazaguanine (preQ1). This chain is NADPH-dependent 7-cyano-7-deazaguanine reductase, found in Agrobacterium fabrum (strain C58 / ATCC 33970) (Agrobacterium tumefaciens (strain C58)).